The following is a 246-amino-acid chain: Carboxymethylenebutenolidase homolog (246 aa).

Residues C132, D179, and H212 contribute to the active site.

The protein belongs to the dienelactone hydrolase family.

It localises to the cytoplasm. The protein localises to the cytosol. Its function is as follows. Cysteine hydrolase. The sequence is that of Carboxymethylenebutenolidase homolog (cmbl) from Xenopus tropicalis (Western clawed frog).